The primary structure comprises 424 residues: STAM-binding protein (424 aa).

The segment at 1–127 (MSDHADVSLP…YEQYKERKKK (127 aa)) is interaction with CHMP3. Ser-2 and Ser-48 each carry phosphoserine. The interval 227–231 (PAKPP) is interaction with STAM. Position 243 is a phosphoserine (Ser-243). One can recognise an MPN domain in the interval 257-388 (IVVPRNLCSE…LTDYGLQEIS (132 aa)). Residues His-335, His-337, Asp-348, His-350, Cys-390, His-396, and His-398 each contribute to the Zn(2+) site. Residues 335–348 (HTHPTQTAFLSSVD) carry the JAMM motif motif.

It belongs to the peptidase M67C family. In terms of assembly, interacts with STAM. Interacts with SMAD6 and SMAD7. Interacts with CHMP3; the interaction appears to relieve the autoinhibition of CHMP3. Interacts with SMURF2 and RNF11; this interaction promotes ubiquitination. It depends on Zn(2+) as a cofactor. Post-translationally, phosphorylated after BMP type I receptor activation. Ubiquitinated by SMURF2 in the presence of RNF11.

Its subcellular location is the nucleus. The protein localises to the membrane. It localises to the cytoplasm. It is found in the early endosome. Inhibited by N-ethylmaleimide. In terms of biological role, zinc metalloprotease that specifically cleaves 'Lys-63'-linked polyubiquitin chains. Does not cleave 'Lys-48'-linked polyubiquitin chains. Plays a role in signal transduction for cell growth and MYC induction mediated by IL-2 and GM-CSF. Potentiates BMP (bone morphogenetic protein) signaling by antagonizing the inhibitory action of SMAD6 and SMAD7. Has a key role in regulation of cell surface receptor-mediated endocytosis and ubiquitin-dependent sorting of receptors to lysosomes. Endosomal localization of STAMBP is required for efficient EGFR degradation but not for its internalization. Involved in the negative regulation of PI3K-AKT-mTOR and RAS-MAP signaling pathways. This is STAM-binding protein (Stambp) from Rattus norvegicus (Rat).